Here is a 142-residue protein sequence, read N- to C-terminus: Large ribosomal subunit protein uL13 (142 aa).

The protein belongs to the universal ribosomal protein uL13 family. As to quaternary structure, part of the 50S ribosomal subunit.

This protein is one of the early assembly proteins of the 50S ribosomal subunit, although it is not seen to bind rRNA by itself. It is important during the early stages of 50S assembly. The sequence is that of Large ribosomal subunit protein uL13 from Edwardsiella ictaluri (strain 93-146).